The sequence spans 923 residues: Protocadherin gamma-B4 (923 aa).

An N-terminal signal peptide occupies residues 1–30 (MGSGAGELGRAERLPVLFLFLLSLFCPALC). 6 consecutive Cadherin domains span residues 31–133 (EQIR…TPKF), 134–242 (TQNS…APVF), 243–345 (SQDV…APEV), 346–450 (IFQS…APVF), 451–560 (SQSS…APRV), and 568–673 (DGSA…LPDI). Topologically, residues 31 to 689 (EQIRYRIPEE…SDLQAELQFY (659 aa)) are extracellular. N-linked (GlcNAc...) asparagine glycans are attached at residues Asn-417 and Asn-543. Residues 690–710 (LVVALALISVLFLVAMILAIA) traverse the membrane as a helical segment. Topologically, residues 711–923 (LRLRRSSSPA…KKKSGKKEKK (213 aa)) are cytoplasmic. 2 disordered regions span residues 797–832 (SHQQ…WPNN) and 893–923 (ATLT…KEKK). The span at 913–923 (NKKKSGKKEKK) shows a compositional bias: basic residues.

The protein resides in the cell membrane. Potential calcium-dependent cell-adhesion protein. May be involved in the establishment and maintenance of specific neuronal connections in the brain. The chain is Protocadherin gamma-B4 (PCDHGB4) from Homo sapiens (Human).